A 613-amino-acid chain; its full sequence is Cysteine--tRNA ligase (613 aa).

Positions 1–130 (MSAGAGTPRR…TRGGVARSGN (130 aa)) are disordered. 6 tandem repeats follow at residues 36–49 (PTRG…RPGV), 50–63 (PTRG…RLGV), 64–77 (PARG…RPGV), 78–91 (PARE…RPGV), 92–105 (PTRG…RLGV), and 106–119 (PARG…RPGV). Residues 36–119 (PTRGDKKRAR…DKKRARRPGV (84 aa)) are 6 X 14 AA tandem repeats of P-[TA]-R-G-D-K-K-R-A-[RP]-R-[PL]-G-V. The cysteinyl-tRNA synthetase stretch occupies residues 148–613 (VTIRLYDTSA…QGPRWSLGSR (466 aa)). Cysteine 176 serves as a coordination point for Zn(2+). The 'HIGH' region motif lies at 178-188 (ATVQAAPHIGH). Positions 355, 380, and 384 each coordinate Zn(2+). A 'KMSKS' region motif is present at residues 411–415 (KMSKS). Lysine 414 lines the ATP pocket.

It belongs to the class-I aminoacyl-tRNA synthetase family. As to quaternary structure, monomer. It depends on Zn(2+) as a cofactor.

It is found in the cytoplasm. The catalysed reaction is tRNA(Cys) + L-cysteine + ATP = L-cysteinyl-tRNA(Cys) + AMP + diphosphate. This is Cysteine--tRNA ligase from Streptomyces coelicolor (strain ATCC BAA-471 / A3(2) / M145).